The sequence spans 61 residues: uncharacterized protein (61 aa).

The stretch at 34–61 forms a coiled coil; the sequence is TDVEDIDRLISMLDDLEAKYERFKKDWE.

This is an uncharacterized protein from Bacillus subtilis (strain 168).